A 161-amino-acid polypeptide reads, in one-letter code: Protein ilm1 (161 aa).

Over 1 to 6 (MLFSFR) the chain is Cytoplasmic. The chain crosses the membrane as a helical span at residues 7-27 (AIVLFYCCMLTFAGIGFLWNP). Residues 28 to 56 (KFVVESGLVALIGASMEVKPLIVTQDNLS) lie on the Lumenal side of the membrane. The helical transmembrane segment at 57 to 77 (TLALSGLVFLILGMIYTISLL) threads the bilayer. The Cytoplasmic segment spans residues 78-81 (QSNF). Residues 82 to 102 (LFFSGITPIRAIFDFILTGFI) traverse the membrane as a helical segment. Residues 103-112 (YLKKEHIASN) are Lumenal-facing. The chain crosses the membrane as a helical span at residues 113-133 (SLTFTFAFCDLMWQFWMFAAM). Over 134–161 (SEERAKYLKNQKKAEELAARKAREVEES) the chain is Cytoplasmic.

The protein belongs to the ILM1 family.

The protein resides in the endoplasmic reticulum. It localises to the membrane. This Schizosaccharomyces pombe (strain 972 / ATCC 24843) (Fission yeast) protein is Protein ilm1.